The following is a 546-amino-acid chain: MAKDVRFDTDARNRMLKGVNTLADAVKVTLGPKGRNVVIDKSFGAPRITKDGVSVAKEIELEDKFENMGAQMVKEVASRTNDEAGDGTTTATVLAQAIIKEGLKSVAAGMNPMDLKRGIDLAVTKVIAEIQGSAREVADSDEVAQVGTISANGEAEIGRQIADAMQKVGNDGVITVEENKGLETETDVVEGMQFDRGYLSPYFVTNPDKMIAELDDCLILLHEKKLSSLQPMVPLLETVIQSGKPLLIIAEDVEGEALATLVVNKLRGGLKIAAVKAPGFGDRRKAMLQDIAILTGGQVIAEDLGMKLESVTMDMLGTAKRLTISKDETTIVDGAGNKPEIEARVAQIRQQIEESTSDYDREKLQERVAKLAGGVAVIKVGGMSEIEVKERKDRVDDALNATRAAVQEGIVVGGGVALVQGGKSLAGLEGENADQNAGIAIVRRALEAPLRQIAENSGVDGSVVAGKIRESDDNAFGFNAQTEEYGDLFKFGVIDPAKVVRTALQDAASVAGLLITTEAMVADKPAKEGAPAGGGMPDMGGMGGMM.

ATP contacts are provided by residues 29 to 32 (TLGP), lysine 50, 86 to 90 (DGTTT), glycine 414, and aspartate 495. Residues 526 to 546 (AKEGAPAGGGMPDMGGMGGMM) form a disordered region. A compositionally biased stretch (gly residues) spans 531 to 546 (PAGGGMPDMGGMGGMM).

This sequence belongs to the chaperonin (HSP60) family. Forms a cylinder of 14 subunits composed of two heptameric rings stacked back-to-back. Interacts with the co-chaperonin GroES.

It localises to the cytoplasm. The enzyme catalyses ATP + H2O + a folded polypeptide = ADP + phosphate + an unfolded polypeptide.. Its function is as follows. Together with its co-chaperonin GroES, plays an essential role in assisting protein folding. The GroEL-GroES system forms a nano-cage that allows encapsulation of the non-native substrate proteins and provides a physical environment optimized to promote and accelerate protein folding. The polypeptide is Chaperonin GroEL (Jannaschia sp. (strain CCS1)).